A 407-amino-acid chain; its full sequence is Arginine deiminase (407 aa).

Catalysis depends on Cys-397, which acts as the Amidino-cysteine intermediate.

It belongs to the arginine deiminase family.

Its subcellular location is the cytoplasm. The enzyme catalyses L-arginine + H2O = L-citrulline + NH4(+). It participates in amino-acid degradation; L-arginine degradation via ADI pathway; carbamoyl phosphate from L-arginine: step 1/2. The polypeptide is Arginine deiminase (Vibrio cholerae serotype O1 (strain ATCC 39541 / Classical Ogawa 395 / O395)).